The sequence spans 314 residues: Oxalate oxidoreductase subunit beta (314 aa).

C24, C27, C52, and C225 together coordinate [4Fe-4S] cluster.

As to quaternary structure, dimer of heterotrimer of one alpha, one beta and one delta subunit. [4Fe-4S] cluster serves as cofactor.

It carries out the reaction oxidized 2[4Fe-4S]-[ferredoxin] + oxalate = reduced 2[4Fe-4S]-[ferredoxin] + 2 CO2. In terms of biological role, catalyzes the anaerobic oxidation of oxalate using a broad range of electron acceptors, including ferredoxin and the nickel-dependent carbon monoxide dehydrogenase. Does not require coenzyme A as cosubstrate. Enables anaerobic growth on oxalate which is used as energy source by the bacteria. The polypeptide is Oxalate oxidoreductase subunit beta (Moorella thermoacetica (strain ATCC 39073 / JCM 9320)).